We begin with the raw amino-acid sequence, 386 residues long: MHLHEYQAKDLLTSYQLPIPPYHVATSLSEAEVAIQAEQWRSGVVKAQVHAGGRGKNGGVIVARSPEDLLAATDRLLHMQFSSNQTAGLSLPVNKVLISPLVEIALEYYIAIVIDRKHRCPVIMLSKSGGIDIEEIAEKQPDLLLKIALPSSGKIYAYQLRHIAKFMEWDKLVADRGNHIIRKLLQCFYDNDASLLEINPLVLTKDGDLIILDAKITIDDNALYRHPQLADWYDPSQENIRDVLAKQLGLSYIALDGTIGCLVNGAGLAMSTLDILKLYGGSAANFLDVGGSASEKQIQEAISLVLSDKNVRVLFIHIFGGIMDCAVVASGLVSAMQGQQGSIPTVIRLEGTNVDKGKEIILRSGIPCEFVASMSEGAELAVKLSR.

The region spanning 9–244 is the ATP-grasp domain; it reads KDLLTSYQLP…PSQENIRDVL (236 aa). ATP-binding positions include Lys-46, 53 to 55, Val-102, and Glu-107; that span reads GRG. Mg(2+)-binding residues include Asn-199 and Asp-213. Substrate is bound by residues Asn-264 and 321–323; that span reads GIM.

This sequence belongs to the succinate/malate CoA ligase beta subunit family. Heterotetramer of two alpha and two beta subunits. The cofactor is Mg(2+).

The enzyme catalyses succinate + ATP + CoA = succinyl-CoA + ADP + phosphate. It carries out the reaction GTP + succinate + CoA = succinyl-CoA + GDP + phosphate. It participates in carbohydrate metabolism; tricarboxylic acid cycle; succinate from succinyl-CoA (ligase route): step 1/1. Succinyl-CoA synthetase functions in the citric acid cycle (TCA), coupling the hydrolysis of succinyl-CoA to the synthesis of either ATP or GTP and thus represents the only step of substrate-level phosphorylation in the TCA. The beta subunit provides nucleotide specificity of the enzyme and binds the substrate succinate, while the binding sites for coenzyme A and phosphate are found in the alpha subunit. In Chlamydia muridarum (strain MoPn / Nigg), this protein is Succinate--CoA ligase [ADP-forming] subunit beta.